A 114-amino-acid polypeptide reads, in one-letter code: UPF0102 protein CD630_12710 (114 aa).

This sequence belongs to the UPF0102 family.

This is UPF0102 protein CD630_12710 from Clostridioides difficile (strain 630) (Peptoclostridium difficile).